Here is a 2919-residue protein sequence, read N- to C-terminus: RNA-directed RNA polymerase L (2919 aa).

The endonuclease stretch occupies residues 86 to 675 (SLMKQLDPND…DNDINLDSAT (590 aa)). Positions 535, 567, and 585 each coordinate Mn(2+). K604 serves as the catalytic For endonuclease activity. The RdRp catalytic domain maps to 1472–1671 (ARKTLKNEYM…SWFRKKEKLG (200 aa)). Residue D1636 participates in Mg(2+) binding. The segment at 2494 to 2632 (RVGKLGILGS…PLYWNPSLST (139 aa)) is cap-binding.

Belongs to the Bunyavirales RNA polymerase family. In terms of assembly, homomultimer. Interacts with glycoprotein N; this interaction allows efficient polymerase packaging into virus particles. Interacts with nucleoprotein N. Mn(2+) is required as a cofactor. The cofactor is Mg(2+).

It is found in the host Golgi apparatus. Its subcellular location is the host endoplasmic reticulum. It localises to the host endoplasmic reticulum-Golgi intermediate compartment. The protein localises to the virion. The enzyme catalyses RNA(n) + a ribonucleoside 5'-triphosphate = RNA(n+1) + diphosphate. Its function is as follows. RNA-dependent RNA polymerase, which is responsible for the replication and transcription of the viral RNA genome using antigenomic RNA as an intermediate. During transcription, synthesizes subgenomic RNAs and assures their capping by a cap-snatching mechanism, which involves the endonuclease activity cleaving the host capped pre-mRNAs. These short capped RNAs are then used as primers for viral transcription. The 3'-end of subgenomic mRNAs molecules are not polyadenylated. During replication, the polymerase binds the 5' and 3' vRNA extremities at distinct sites. In turn, significant conformational changes occur in the polymerase and in vRNA to initiate active RNA synthesis. As a consequence of the use of the same enzyme for both transcription and replication, these mechanisms need to be well coordinated. In Avena sativa (Oat), this protein is RNA-directed RNA polymerase L.